We begin with the raw amino-acid sequence, 365 residues long: Chorismate synthase (365 aa).

Residue Arg-46 participates in NADP(+) binding. FMN is bound by residues Arg-123 to Ser-125, Asn-241 to Gly-242, Gly-281, Lys-296 to Ser-300, and Arg-322.

Belongs to the chorismate synthase family. As to quaternary structure, homotetramer. FMNH2 serves as cofactor.

It catalyses the reaction 5-O-(1-carboxyvinyl)-3-phosphoshikimate = chorismate + phosphate. It participates in metabolic intermediate biosynthesis; chorismate biosynthesis; chorismate from D-erythrose 4-phosphate and phosphoenolpyruvate: step 7/7. Catalyzes the anti-1,4-elimination of the C-3 phosphate and the C-6 proR hydrogen from 5-enolpyruvylshikimate-3-phosphate (EPSP) to yield chorismate, which is the branch point compound that serves as the starting substrate for the three terminal pathways of aromatic amino acid biosynthesis. This reaction introduces a second double bond into the aromatic ring system. This chain is Chorismate synthase, found in Helicobacter pylori (strain J99 / ATCC 700824) (Campylobacter pylori J99).